Here is a 1170-residue protein sequence, read N- to C-terminus: Putative DNA topoisomerase 2, mitochondrial (1170 aa).

ATP is bound by residues Asn-106, Asn-135, 163–165, 176–183, and 396–398; these read SSN, GRNGYGAK, and QTK. The 116-residue stretch at 475–590 folds into the Toprim domain; it reads CTLILTEGDS…SLVHTDGFIQ (116 aa). Residues Glu-481, Asp-559, and Asp-561 each contribute to the Mg(2+) site. Residues 722–1157 form the Topo IIA-type catalytic domain; it reads IPSLIDGLKP…DWKSVWRSEL (436 aa). Catalysis depends on Tyr-813, which acts as the O-(5'-phospho-DNA)-tyrosine intermediate.

It belongs to the type II topoisomerase family. In terms of assembly, homodimer. It depends on Mg(2+) as a cofactor. The cofactor is Mn(2+). Ca(2+) serves as cofactor.

Its subcellular location is the mitochondrion. It carries out the reaction ATP-dependent breakage, passage and rejoining of double-stranded DNA.. In terms of biological role, control of topological states of DNA by transient breakage and subsequent rejoining of DNA strands. Topoisomerase II makes double-strand breaks. The chain is Putative DNA topoisomerase 2, mitochondrial from Caenorhabditis elegans.